A 296-amino-acid polypeptide reads, in one-letter code: Probable endonuclease 4 (296 aa).

Positions 68, 108, 145, 179, 182, 216, 229, 231, and 261 each coordinate Zn(2+).

The protein belongs to the AP endonuclease 2 family. The cofactor is Zn(2+).

It catalyses the reaction Endonucleolytic cleavage to 5'-phosphooligonucleotide end-products.. Its function is as follows. Endonuclease IV plays a role in DNA repair. It cleaves phosphodiester bonds at apurinic or apyrimidinic (AP) sites, generating a 3'-hydroxyl group and a 5'-terminal sugar phosphate. This is Probable endonuclease 4 from Geobacter sulfurreducens (strain ATCC 51573 / DSM 12127 / PCA).